The sequence spans 378 residues: Quinolinate synthase (378 aa).

The iminosuccinate site is built by His59 and Ser80. Cys125 lines the [4Fe-4S] cluster pocket. Residues Tyr151–Asn153 and Ser168 each bind iminosuccinate. Cys212 provides a ligand contact to [4Fe-4S] cluster. Iminosuccinate contacts are provided by residues His238–Glu240 and Thr255. Cys309 is a binding site for [4Fe-4S] cluster.

Belongs to the quinolinate synthase family. Type 1 subfamily. [4Fe-4S] cluster is required as a cofactor.

It localises to the cytoplasm. It carries out the reaction iminosuccinate + dihydroxyacetone phosphate = quinolinate + phosphate + 2 H2O + H(+). Its pathway is cofactor biosynthesis; NAD(+) biosynthesis; quinolinate from iminoaspartate: step 1/1. Catalyzes the condensation of iminoaspartate with dihydroxyacetone phosphate to form quinolinate. This Burkholderia pseudomallei (strain 1106a) protein is Quinolinate synthase.